Here is a 278-residue protein sequence, read N- to C-terminus: Large ribosomal subunit protein uL2 (278 aa).

Residues 223-278 (GVAMNPIDHPHGGGEGRTSGGRHPVTPWGFPTKGKKTRSNKRTDTFIVSSRHNRKK) are disordered.

This sequence belongs to the universal ribosomal protein uL2 family. In terms of assembly, part of the 50S ribosomal subunit. Forms a bridge to the 30S subunit in the 70S ribosome.

One of the primary rRNA binding proteins. Required for association of the 30S and 50S subunits to form the 70S ribosome, for tRNA binding and peptide bond formation. It has been suggested to have peptidyltransferase activity; this is somewhat controversial. Makes several contacts with the 16S rRNA in the 70S ribosome. This chain is Large ribosomal subunit protein uL2, found in Methylobacterium sp. (strain 4-46).